The chain runs to 174 residues: NADH-ubiquinone oxidoreductase chain 6 (174 aa).

Transmembrane regions (helical) follow at residues 1–21 (MTYV…GFSS), 24–44 (SPIY…TIIL), 47–67 (GGGY…MVVF), 86–106 (VEVL…VLWV), 111–131 (GVVV…EGEG), and 151–171 (WLVV…IEIA).

The protein belongs to the complex I subunit 6 family. Core subunit of respiratory chain NADH dehydrogenase (Complex I) which is composed of 45 different subunits.

It is found in the mitochondrion inner membrane. It catalyses the reaction a ubiquinone + NADH + 5 H(+)(in) = a ubiquinol + NAD(+) + 4 H(+)(out). In terms of biological role, core subunit of the mitochondrial membrane respiratory chain NADH dehydrogenase (Complex I) which catalyzes electron transfer from NADH through the respiratory chain, using ubiquinone as an electron acceptor. Essential for the catalytic activity and assembly of complex I. The protein is NADH-ubiquinone oxidoreductase chain 6 (MT-ND6) of Pan paniscus (Pygmy chimpanzee).